The following is a 504-amino-acid chain: Myocilin (504 aa).

A signal peptide spans 1 to 32 (MRFFCARCCSFGPEMPAVQLLLLACLVWDVGA). A glycan (N-linked (GlcNAc...) asparagine) is linked at asparagine 57. A coiled-coil region spans residues 74–184 (LQRDSSTQRL…QEVARLRRGQ (111 aa)). Disordered stretches follow at residues 106–131 (QAAR…RDQL) and 170–200 (LESS…PGSR). The span at 122–131 (GTLRRERDQL) shows a compositional bias: basic and acidic residues. One can recognise an Olfactomedin-like domain in the interval 244 to 503 (GCGELVWVGE…MVTYDIKLSK (260 aa)). A disulfide bridge links cysteine 245 with cysteine 433. 5 residues coordinate Ca(2+): aspartate 380, asparagine 428, alanine 429, isoleucine 477, and aspartate 478. The Microbody targeting signal motif lies at 502–504 (SKM).

Homodimer (via N-terminus). Can also form higher oligomers. Interacts with OLFM3, FN1, NRCAM, GLDN and NFASC. Interacts (via N-terminus) with MYL2. Interacts with SFRP1, FRZB, FZD7, FZD10, FZD1 and WIF1; regulates Wnt signaling. Interacts with SNTA1; regulates muscle hypertrophy. Interacts with ERBB2 and ERBB3; activates ERBB2-ERBB3 signaling pathway. Interacts with SNCG; affects its secretion and its aggregation. Post-translationally, different isoforms may arise by post-translational modifications. In terms of processing, glycosylated. Palmitoylated. Post-translationally, undergoes a calcium-dependent proteolytic cleavage at Arg-226 by CAPN2 in the endoplasmic reticulum. The result is the production of two fragments, one of 35 kDa containing the C-terminal olfactomedin-like domain, and another of 20 kDa containing the N-terminal leucine zipper-like domain. As to expression, detected in aqueous humor. Detected in the eye (at protein level). Widely expressed. Highly expressed in various types of muscle, ciliary body, papillary sphincter, skeletal muscle, heart, and bone marrow-derived mesenchymal stem cells. Expressed predominantly in the retina. In normal eyes, found in the inner uveal meshwork region and the anterior portion of the meshwork. In contrast, in many glaucomatous eyes, it is found in more regions of the meshwork and seems to be expressed at higher levels than in normal eyes, regardless of the type or clinical severity of glaucoma. The myocilin 35 kDa fragment is detected in aqueous humor and to a lesser extent in iris and ciliary body.

The protein resides in the secreted. It localises to the golgi apparatus. It is found in the cytoplasmic vesicle. The protein localises to the extracellular space. Its subcellular location is the extracellular matrix. The protein resides in the extracellular exosome. It localises to the mitochondrion. It is found in the mitochondrion intermembrane space. The protein localises to the mitochondrion inner membrane. Its subcellular location is the mitochondrion outer membrane. The protein resides in the rough endoplasmic reticulum. It localises to the cell projection. It is found in the cilium. The protein localises to the endoplasmic reticulum. Secreted glycoprotein regulating the activation of different signaling pathways in adjacent cells to control different processes including cell adhesion, cell-matrix adhesion, cytoskeleton organization and cell migration. Promotes substrate adhesion, spreading and formation of focal contacts. Negatively regulates cell-matrix adhesion and stress fiber assembly through Rho protein signal transduction. Modulates the organization of actin cytoskeleton by stimulating the formation of stress fibers through interactions with components of Wnt signaling pathways. Promotes cell migration through activation of PTK2 and the downstream phosphatidylinositol 3-kinase signaling. Plays a role in bone formation and promotes osteoblast differentiation in a dose-dependent manner through mitogen-activated protein kinase signaling. Mediates myelination in the peripheral nervous system through ERBB2/ERBB3 signaling. Plays a role as a regulator of muscle hypertrophy through the components of dystrophin-associated protein complex. Involved in positive regulation of mitochondrial depolarization. Plays a role in neurite outgrowth. May participate in the obstruction of fluid outflow in the trabecular meshwork. This chain is Myocilin (MYOC), found in Homo sapiens (Human).